A 440-amino-acid polypeptide reads, in one-letter code: Protein arginine N-methyltransferase 2 (440 aa).

Residues Leu-147–Lys-194 are disordered. A compositionally biased stretch (acidic residues) spans Glu-152–Ala-168. Basic and acidic residues predominate over residues Glu-182 to Lys-194. Residues Lys-192–Leu-440 form the RMT2 domain. Residues Tyr-201, Met-230, Phe-252–Val-257, Glu-273–His-275, Trp-310–Gln-311, and Asp-330 each bind S-adenosyl-L-methionine.

This sequence belongs to the class I-like SAM-binding methyltransferase superfamily. RMT2 methyltransferase family. As to quaternary structure, monomer.

It is found in the cytoplasm. The protein resides in the nucleus. In terms of biological role, S-adenosyl-L-methionine-dependent protein-arginine N-methyltransferase that methylates the delta-nitrogen atom of arginine residues to form N5-methylarginine (type IV) in target proteins. Monomethylates ribosomal protein L12. This is Protein arginine N-methyltransferase 2 from Gibberella zeae (strain ATCC MYA-4620 / CBS 123657 / FGSC 9075 / NRRL 31084 / PH-1) (Wheat head blight fungus).